Consider the following 278-residue polypeptide: 2-dehydro-3-deoxyphosphooctonate aldolase (278 aa).

The protein belongs to the KdsA family.

The protein resides in the cytoplasm. The enzyme catalyses D-arabinose 5-phosphate + phosphoenolpyruvate + H2O = 3-deoxy-alpha-D-manno-2-octulosonate-8-phosphate + phosphate. The protein operates within carbohydrate biosynthesis; 3-deoxy-D-manno-octulosonate biosynthesis; 3-deoxy-D-manno-octulosonate from D-ribulose 5-phosphate: step 2/3. It functions in the pathway bacterial outer membrane biogenesis; lipopolysaccharide biosynthesis. In Koribacter versatilis (strain Ellin345), this protein is 2-dehydro-3-deoxyphosphooctonate aldolase.